We begin with the raw amino-acid sequence, 1271 residues long: Clustered mitochondria protein homolog (1271 aa).

2 TPR repeats span residues 104 to 138 and 502 to 535; these read RHKPYTLAAVYEHLNKFREVIGLHFIDRRAFELGE and CYGLSTDGTKVYSDSQFHEALKPIAEAFHMKPHK. The 252-residue stretch at 329–580 folds into the Clu domain; that stretch reads DQSRPQLSIL…RSTPLDIDFI (252 aa). Residues 729–763 are compositionally biased toward basic and acidic residues; that stretch reads QEEKSKIEDNEKAIEEEKKEEKTEKKEEKEEKADE. Positions 729–783 are disordered; that stretch reads QEEKSKIEDNEKAIEEEKKEEKTEKKEEKEEKADEEKSENEEDKTKPEEPSKGVF. TPR repeat units lie at residues 1067–1100, 1109–1142, and 1151–1184; these read ISSYINSAYFEAANSSYVNAFKLYEKALGDWDFV, VTTLTNLAEILAQLKITDKANRLFSAALELSEKI, and AMIHYRFAGTLVNENRFDEALGHFEKAHTTFSRH. The interval 1212–1271 is disordered; sequence QAKDKNKPKKVKAPPVPPQATTKKSKNKSKMAQTQISKLHLNSSTRFSSSSRVKPRLKKK. Over residues 1241-1253 the composition is skewed to polar residues; it reads KMAQTQISKLHLN. Low complexity predominate over residues 1254 to 1263; it reads SSTRFSSSSR.

The protein belongs to the CLU family. May associate with the eukaryotic translation initiation factor 3 (eIF-3) complex.

It localises to the cytoplasm. MRNA-binding protein involved in proper cytoplasmic distribution of mitochondria. The polypeptide is Clustered mitochondria protein homolog (Meyerozyma guilliermondii (strain ATCC 6260 / CBS 566 / DSM 6381 / JCM 1539 / NBRC 10279 / NRRL Y-324) (Yeast)).